The sequence spans 302 residues: NAD kinase 2 (302 aa).

The active-site Proton acceptor is the aspartate 78. NAD(+) contacts are provided by residues 78–79 (DG), 152–153 (NE), aspartate 182, 193–198 (TAYALS), and alanine 217.

Belongs to the NAD kinase family. It depends on a divalent metal cation as a cofactor.

Its subcellular location is the cytoplasm. The catalysed reaction is NAD(+) + ATP = ADP + NADP(+) + H(+). Its function is as follows. Involved in the regulation of the intracellular balance of NAD and NADP, and is a key enzyme in the biosynthesis of NADP. Catalyzes specifically the phosphorylation on 2'-hydroxyl of the adenosine moiety of NAD to yield NADP. The protein is NAD kinase 2 of Prochlorococcus marinus (strain MIT 9313).